The following is a 578-amino-acid chain: Avenacosidase 2 (578 aa).

Residues methionine 1–serine 57 constitute a chloroplast transit peptide. A beta-D-glucoside-binding positions include glutamine 89, histidine 193, and asparagine 238–glutamate 239. Glutamate 239 acts as the Proton donor in catalysis. An intrachain disulfide couples cysteine 258 to cysteine 264. Residues tyrosine 381, glutamate 454, tryptophan 504, glutamate 511–tryptophan 512, and phenylalanine 520 contribute to the a beta-D-glucoside site. Catalysis depends on glutamate 454, which acts as the Nucleophile.

Belongs to the glycosyl hydrolase 1 family. As to quaternary structure, heteromultimer with P60A in a 1:1 stoichiometry. Aggregates to form the fibrillar stromacentre.

It localises to the plastid. Its subcellular location is the chloroplast stroma. The enzyme catalyses avenacoside B + H2O = 26-desgluco-avenacoside B + D-glucose. In terms of biological role, beta-glucosidase acting as a preformed defense system. Hydrolyzes the bisdesmosides avenacosides A and B to 26-desgluco-avenacosides exhibiting fungicidal activity. Can use beta-fucoside &gt; beta-glucoside &gt; beta-galactoside &gt; beta-xyloside as substrates, but not alpha-glycosides, beta-thioglucosides and disaccharides. This Avena sativa (Oat) protein is Avenacosidase 2 (P60B).